The sequence spans 205 residues: Thiamine-phosphate synthase (205 aa).

Residues 35–39 (QYRDK) and asparagine 67 contribute to the 4-amino-2-methyl-5-(diphosphooxymethyl)pyrimidine site. Aspartate 68 and aspartate 86 together coordinate Mg(2+). Threonine 105 lines the 4-amino-2-methyl-5-(diphosphooxymethyl)pyrimidine pocket. 132–134 (SQT) provides a ligand contact to 2-[(2R,5Z)-2-carboxy-4-methylthiazol-5(2H)-ylidene]ethyl phosphate. Residue lysine 135 participates in 4-amino-2-methyl-5-(diphosphooxymethyl)pyrimidine binding. Glycine 162 is a 2-[(2R,5Z)-2-carboxy-4-methylthiazol-5(2H)-ylidene]ethyl phosphate binding site.

This sequence belongs to the thiamine-phosphate synthase family. It depends on Mg(2+) as a cofactor.

The catalysed reaction is 2-[(2R,5Z)-2-carboxy-4-methylthiazol-5(2H)-ylidene]ethyl phosphate + 4-amino-2-methyl-5-(diphosphooxymethyl)pyrimidine + 2 H(+) = thiamine phosphate + CO2 + diphosphate. It catalyses the reaction 2-(2-carboxy-4-methylthiazol-5-yl)ethyl phosphate + 4-amino-2-methyl-5-(diphosphooxymethyl)pyrimidine + 2 H(+) = thiamine phosphate + CO2 + diphosphate. The enzyme catalyses 4-methyl-5-(2-phosphooxyethyl)-thiazole + 4-amino-2-methyl-5-(diphosphooxymethyl)pyrimidine + H(+) = thiamine phosphate + diphosphate. The protein operates within cofactor biosynthesis; thiamine diphosphate biosynthesis; thiamine phosphate from 4-amino-2-methyl-5-diphosphomethylpyrimidine and 4-methyl-5-(2-phosphoethyl)-thiazole: step 1/1. In terms of biological role, condenses 4-methyl-5-(beta-hydroxyethyl)thiazole monophosphate (THZ-P) and 2-methyl-4-amino-5-hydroxymethyl pyrimidine pyrophosphate (HMP-PP) to form thiamine monophosphate (TMP). The sequence is that of Thiamine-phosphate synthase from Pseudomonas syringae pv. tomato (strain ATCC BAA-871 / DC3000).